The following is a 121-amino-acid chain: 18 kDa learning-associated protein of slug (121 aa).

Disordered stretches follow at residues T44–E67 and A95–W121. Residues M45 to G64 show a composition bias toward polar residues.

The protein belongs to the learning-associated protein family. As to expression, expressed predominantly in cerebral ganglia (at protein level). The mRNA is highly expressed in cerebral ganglia, and is detected at lower levels in visceral-pedal ganglia, head, and body, but is not detected in the tail.

The protein resides in the cytoplasm. Its subcellular location is the secreted. In terms of biological role, may be involved in modulating long-term memory formation and retention, at least with respect to odor-taste associative learning. This is 18 kDa learning-associated protein of slug from Lehmannia marginata (Tree slug).